Here is a 156-residue protein sequence, read N- to C-terminus: MYRVGIGFDAHPLEANKKGLYLGGVKVSEEYSSIGHSDGDALIHAIVDAILGATNAGNIGIWFPENEENRGRRSTEFLEIIRKKILAGKYEILNIDSVIIIDKVRMNPHIENIRLKLARILGISKGNINVKPKSGNTLYGNSVSVYAVCMLKKVGT.

The a divalent metal cation site is built by Asp9 and His11. Residues 9 to 11 (DAH) and 36 to 37 (HS) each bind 4-CDP-2-C-methyl-D-erythritol 2-phosphate. Residue His44 coordinates a divalent metal cation. A 4-CDP-2-C-methyl-D-erythritol 2-phosphate-binding site is contributed by 58 to 60 (NIG).

Belongs to the IspF family. In terms of assembly, homotrimer. A divalent metal cation is required as a cofactor.

It catalyses the reaction 4-CDP-2-C-methyl-D-erythritol 2-phosphate = 2-C-methyl-D-erythritol 2,4-cyclic diphosphate + CMP. It participates in isoprenoid biosynthesis; isopentenyl diphosphate biosynthesis via DXP pathway; isopentenyl diphosphate from 1-deoxy-D-xylulose 5-phosphate: step 4/6. Functionally, involved in the biosynthesis of isopentenyl diphosphate (IPP) and dimethylallyl diphosphate (DMAPP), two major building blocks of isoprenoid compounds. Catalyzes the conversion of 4-diphosphocytidyl-2-C-methyl-D-erythritol 2-phosphate (CDP-ME2P) to 2-C-methyl-D-erythritol 2,4-cyclodiphosphate (ME-CPP) with a corresponding release of cytidine 5-monophosphate (CMP). This is 2-C-methyl-D-erythritol 2,4-cyclodiphosphate synthase from Kosmotoga olearia (strain ATCC BAA-1733 / DSM 21960 / TBF 19.5.1).